An 860-amino-acid chain; its full sequence is Spindle and centriole-associated protein 1 (860 aa).

Disordered regions lie at residues 127–150 (RKRTGFPNVTRAPDSSQSHTGINQ), 172–201 (DDAGEQSTAHSQSEDSENELPNSLSQHSNR), 230–250 (ATQSQRTPPGSPSSELSAEDQ), and 294–332 (PLLAKVKRKQDMHAASKQKTNMLSSSTASADRPSSTGSS). 3 stretches are compositionally biased toward polar residues: residues 139–150 (PDSSQSHTGINQ), 190–200 (ELPNSLSQHSN), and 230–245 (ATQSQRTPPGSPSSEL). T236 is modified (phosphothreonine). Phosphoserine is present on S240. Positions 317 to 329 (SSSTASADRPSST) are enriched in low complexity. Residues 383–439 (RYLKESEIQLRKEVETRQQLEQMLGDHRELIDALTAEILSLREENSTMQARLQQYMV) adopt a coiled-coil conformation. A disordered region spans residues 623–645 (PAFVSLSQPPCSSLPSTQQPRNP). Positions 627–642 (SLSQPPCSSLPSTQQP) are enriched in low complexity. Phosphoserine is present on S648. The interval 693-718 (ITSSGGEQGDGLREPRKQGSASEVST) is disordered. Residues 729 to 757 (SSMEERIAELNRQSMEARSKLLQLIEQQK) are a coiled coil. Residues S765, S766, S769, and S824 each carry the phosphoserine modification. Residues 792–860 (GMEASESSKC…GWFALSAHIP (69 aa)) are disordered. Residues 804-824 (VSPVSGNSSRRSSGAISNSCS) are compositionally biased toward low complexity.

Interacts with CEP120.

It localises to the cytoplasm. The protein resides in the cytoskeleton. Its subcellular location is the microtubule organizing center. The protein localises to the centrosome. It is found in the centriole. It localises to the spindle. Regulator required for centriole duplication, for proper bipolar spindle formation and chromosome congression in mitosis. This is Spindle and centriole-associated protein 1 (Spice1) from Mus musculus (Mouse).